We begin with the raw amino-acid sequence, 65 residues long: Gallinacin-1 alpha (65 aa).

Positions 1–19 (MRIVYLLLPFILLLAQGAA) are cleaved as a signal peptide. Residues 20 to 25 (GSSQAL) constitute a propeptide that is removed on maturation. 3 cysteine pairs are disulfide-bonded: cysteine 31–cysteine 59, cysteine 38–cysteine 53, and cysteine 43–cysteine 60.

This sequence belongs to the beta-defensin family.

Its subcellular location is the secreted. The protein localises to the cytoplasmic granule. Has bactericidal activity. Potent activity against E.coli ML-35, L.monocytogenes EGD and C.albicans. The polypeptide is Gallinacin-1 alpha (Gallus gallus (Chicken)).